A 532-amino-acid polypeptide reads, in one-letter code: Membrane protein insertase YidC (532 aa).

Transmembrane regions (helical) follow at residues 7-27, 336-356, 413-433, 450-470, and 492-512; these read FFIF…QSQM, LTIL…ITFI, GGFL…YMLI, LSSQ…MFFI, and PVIF…YYII.

This sequence belongs to the OXA1/ALB3/YidC family. Type 1 subfamily. In terms of assembly, interacts with the Sec translocase complex via SecD. Specifically interacts with transmembrane segments of nascent integral membrane proteins during membrane integration.

The protein localises to the cell membrane. Functionally, required for the insertion and/or proper folding and/or complex formation of integral membrane proteins into the membrane. Involved in integration of membrane proteins that insert both dependently and independently of the Sec translocase complex, as well as at least some lipoproteins. Aids folding of multispanning membrane proteins. The chain is Membrane protein insertase YidC from Buchnera aphidicola subsp. Acyrthosiphon pisum (strain APS) (Acyrthosiphon pisum symbiotic bacterium).